A 3674-amino-acid chain; its full sequence is Dystrophin-1 (3674 aa).

The disordered stretch occupies residues 1-25 (MLFSGASTAKPKKDEKKDKKSDRDP). The span at 11-25 (PKKDEKKDKKSDRDP) shows a compositional bias: basic and acidic residues. Residues 30 to 39 (QEWVFVRWAN) are actin-binding. The region spanning 129–234 (EKLSEAIKQW…YLMSLYLAMI (106 aa)) is the Calponin-homology (CH) domain. The tract at residues 265-325 (SQPSTSSSSA…KSGKSKKARR (61 aa)) is disordered. 3 Spectrin repeats span residues 327–435 (EQLA…VLQQ), 436–541 (QIHL…KLDG), and 612–656 (CELV…TLVK). Residues 655–674 (VKSGKADVKQVQESQNEQKE) are compositionally biased toward basic and acidic residues. Disordered regions lie at residues 655–689 (VKSG…TEGE), 968–991 (NSQM…EKRR), 1587–1606 (ASAE…SSPS), 1796–1833 (LSAT…SRSS), and 2387–2466 (MNDS…GSTG). A compositionally biased stretch (polar residues) spans 675–685 (QPASSEGLSTD). The segment covering 975–991 (TVEKAETRKAEMEEKRR) has biased composition (basic and acidic residues). The segment covering 1796–1830 (LSATEKKPVETVKSTIPDRPEVPEEPEKSSPDRTS) has biased composition (basic and acidic residues). Residues 2391 to 2411 (GGDTTESRSTVVEMTSVHTKQ) show a composition bias toward polar residues. 4 Spectrin repeats span residues 2576–2673 (RNEM…VLEA), 2725–2789 (FKTL…RLEK), 2792–2905 (QEWE…RLKK), and 2926–3032 (QRLQ…AVRN). The region spanning 3047-3081 (QSVTLPWQRAISKSNLLPYYIEQTSEKTQWEHPVW) is the WW domain. The segment at 3301–3357 (KHASKCNVCKMFPIIGIRYRCLTCFNCDLCQNCFFSQRTAKSHRTNHPMQEYCEKTT) adopts a ZZ-type zinc-finger fold. Residues Cys-3306, Cys-3309, Cys-3321, Cys-3324, Cys-3330, Cys-3333, His-3343, and His-3347 each coordinate Zn(2+). Disordered stretches follow at residues 3481–3522 (STME…TQSQ) and 3568–3645 (KQQA…QMQN). Over residues 3568–3579 (KQQAPLSTNSLL) the composition is skewed to polar residues.

Component of the dystrophin glycoprotein complex (DGC). Interacts with dyb-1 and stn-1 to form the DGC. Interacts with stn-2. In terms of tissue distribution, expressed in body wall, head, pharyngeal and vulval muscles, from late embryogenesis to adulthood (at protein level).

It is found in the cell membrane. The protein localises to the sarcolemma. The protein resides in the cytoplasm. Its subcellular location is the cytoskeleton. In terms of biological role, plays a role in cholinergic transmission and as a functional partner of dystrobrevin (dyb-1), necessary for muscle maintenance. Required for neuronal positioning. May play a role in the localization of slo-1 near dense bodies in the muscle. The sequence is that of Dystrophin-1 (dys-1) from Caenorhabditis elegans.